Reading from the N-terminus, the 257-residue chain is Probable oxidoreductase yanE (257 aa).

This sequence belongs to the oxidoreductase OpS7 family.

The protein operates within secondary metabolite biosynthesis; terpenoid biosynthesis. Functionally, part of the gene cluster that mediates the biosynthesis of yanuthone D, a fungal isoprenoid epoxycyclohexenone that acts as an antibiotic against fungi and bacteria. The first step of the pathway is the synthesis of 6-methylsalicylic acid (6-MSA) by the polyketide synthase yanA. 6-MSA is then converted to m-cresol by the decarboxylase yanB. The cytochrome P450 monooxygenase yanC then catalyzes the oxidation of m-cresol to toluquinol. Epoxidation of toluquinol is then performed by the short chain dehydrogenase yanD, with the help of yanE, and a further prenylation by yanG leads to 7-deacetoxyyanuthone A. The next step is the hydroxylation of C-22 of 7-deacetoxyyanuthone A by the cytochrome P450 monooxygenase yanH to yield 22-deacetylyanuthone A. O-Mevalon transferase yanI then attaches mevalon to the hydroxyl group of 22-deacetylyanuthone A to produce yanuthone E. Finally, the FAD-dependent monooxygenase yanF oxidizes the hydroxyl group at C15 of yanuthone E to form yanuthone D. Furthermore, several branching points in the pathway lead to the production of yanuthones F and G from 7-deacetoxyyanuthone A; yanuthones H and I from 22-deacetylyanuthone A; and yanuthone J from yanuthone E. YanE is also involved in the synthesis of yanuthone X1 which does not have 6-methylsalicylic acid (6-MSA) as precursor. The protein is Probable oxidoreductase yanE of Aspergillus niger (strain ATCC 1015 / CBS 113.46 / FGSC A1144 / LSHB Ac4 / NCTC 3858a / NRRL 328 / USDA 3528.7).